The chain runs to 210 residues: Probable membrane protein MT1774 (210 aa).

The next 2 helical transmembrane spans lie at 43 to 63 and 165 to 185; these read AVVM…AAAA and ALAA…LLAL.

It localises to the cell membrane. The chain is Probable membrane protein MT1774 from Mycobacterium tuberculosis (strain CDC 1551 / Oshkosh).